A 158-amino-acid chain; its full sequence is Putative pre-16S rRNA nuclease (158 aa).

It belongs to the YqgF nuclease family.

It localises to the cytoplasm. Functionally, could be a nuclease involved in processing of the 5'-end of pre-16S rRNA. In Paracoccus denitrificans (strain Pd 1222), this protein is Putative pre-16S rRNA nuclease.